The following is a 157-amino-acid chain: Transcriptional repressor NrdR (157 aa).

The interval 1-21 (MKCPHCGNNGSRVVDSRPTDE) is disordered. A zinc finger lies at 3–34 (CPHCGNNGSRVVDSRPTDEGRVIRRRRECEKC). An ATP-cone domain is found at 49–139 (LLVIKKNGSR…VYRQFKDMHV (91 aa)).

Belongs to the NrdR family. It depends on Zn(2+) as a cofactor.

Its function is as follows. Negatively regulates transcription of bacterial ribonucleotide reductase nrd genes and operons by binding to NrdR-boxes. The sequence is that of Transcriptional repressor NrdR from Pediococcus pentosaceus (strain ATCC 25745 / CCUG 21536 / LMG 10740 / 183-1w).